A 236-amino-acid polypeptide reads, in one-letter code: Biosynthetic peptidoglycan transglycosylase (236 aa).

A helical membrane pass occupies residues 12-31 (ALLWFVAGSIVLVLVFRWVP).

Belongs to the glycosyltransferase 51 family.

Its subcellular location is the cell inner membrane. The catalysed reaction is [GlcNAc-(1-&gt;4)-Mur2Ac(oyl-L-Ala-gamma-D-Glu-L-Lys-D-Ala-D-Ala)](n)-di-trans,octa-cis-undecaprenyl diphosphate + beta-D-GlcNAc-(1-&gt;4)-Mur2Ac(oyl-L-Ala-gamma-D-Glu-L-Lys-D-Ala-D-Ala)-di-trans,octa-cis-undecaprenyl diphosphate = [GlcNAc-(1-&gt;4)-Mur2Ac(oyl-L-Ala-gamma-D-Glu-L-Lys-D-Ala-D-Ala)](n+1)-di-trans,octa-cis-undecaprenyl diphosphate + di-trans,octa-cis-undecaprenyl diphosphate + H(+). The protein operates within cell wall biogenesis; peptidoglycan biosynthesis. Its function is as follows. Peptidoglycan polymerase that catalyzes glycan chain elongation from lipid-linked precursors. This is Biosynthetic peptidoglycan transglycosylase from Pseudomonas putida (strain ATCC 47054 / DSM 6125 / CFBP 8728 / NCIMB 11950 / KT2440).